A 94-amino-acid chain; its full sequence is Small ribosomal subunit protein uS19 (94 aa).

It belongs to the universal ribosomal protein uS19 family.

Functionally, protein S19 forms a complex with S13 that binds strongly to the 16S ribosomal RNA. This Anaplasma phagocytophilum (strain HZ) protein is Small ribosomal subunit protein uS19.